Here is a 311-residue protein sequence, read N- to C-terminus: Hevamine-A (311 aa).

The N-terminal stretch at M1 to G26 is a signal peptide. Residues G27–L302 enclose the GH18 domain. Cystine bridges form between C46-C93 and C76-C83. E153 (proton donor) is an active-site residue. A disulfide bridge connects residues C185 and C214. Residues L300–L311 constitute a propeptide, removed in mature form.

The protein belongs to the glycosyl hydrolase 18 family. Chitinase class II subfamily.

It localises to the vacuole. The catalysed reaction is Random endo-hydrolysis of N-acetyl-beta-D-glucosaminide (1-&gt;4)-beta-linkages in chitin and chitodextrins.. It catalyses the reaction Hydrolysis of (1-&gt;4)-beta-linkages between N-acetylmuramic acid and N-acetyl-D-glucosamine residues in a peptidoglycan and between N-acetyl-D-glucosamine residues in chitodextrins.. In terms of biological role, bifunctional enzyme with lysozyme / chitinase activity. May have a role in plugging the latex vessel and cessation of latex flow. This chain is Hevamine-A, found in Hevea brasiliensis (Para rubber tree).